An 868-amino-acid polypeptide reads, in one-letter code: DNA mismatch repair protein MutS (868 aa).

Glycine 621–serine 628 contributes to the ATP binding site. The disordered stretch occupies residues leucine 803–proline 852. Over residues proline 823–glutamate 832 the composition is skewed to pro residues.

Belongs to the DNA mismatch repair MutS family.

In terms of biological role, this protein is involved in the repair of mismatches in DNA. It is possible that it carries out the mismatch recognition step. This protein has a weak ATPase activity. This chain is DNA mismatch repair protein MutS, found in Halorhodospira halophila (strain DSM 244 / SL1) (Ectothiorhodospira halophila (strain DSM 244 / SL1)).